A 262-amino-acid chain; its full sequence is Ribose-5-phosphate isomerase A (262 aa).

Residues threonine 33 to threonine 36, aspartate 89 to aspartate 92, and lysine 102 to glycine 105 contribute to the substrate site. The active-site Proton acceptor is the glutamate 111. Lysine 129 serves as a coordination point for substrate.

The protein belongs to the ribose 5-phosphate isomerase family. As to quaternary structure, homodimer.

It carries out the reaction aldehydo-D-ribose 5-phosphate = D-ribulose 5-phosphate. The protein operates within carbohydrate degradation; pentose phosphate pathway; D-ribose 5-phosphate from D-ribulose 5-phosphate (non-oxidative stage): step 1/1. In terms of biological role, catalyzes the reversible conversion of ribose-5-phosphate to ribulose 5-phosphate. This chain is Ribose-5-phosphate isomerase A, found in Cereibacter sphaeroides (strain ATCC 17029 / ATH 2.4.9) (Rhodobacter sphaeroides).